The chain runs to 212 residues: Cyclin-dependent kinase inhibitor 3 (212 aa).

The disordered stretch occupies residues 1-24 (MKPPISIQASEFDSSDEEPADDEQ). Residues 1-34 (MKPPISIQASEFDSSDEEPADDEQTPIQISWLPL) are interaction with CDK2. A compositionally biased stretch (acidic residues) spans 13–24 (DSSDEEPADDEQ). The Tyrosine-protein phosphatase domain maps to 32 to 201 (LPLSRVNCSQ…FRDKLAAYLS (170 aa)). Residue Cys-140 is the Phosphocysteine intermediate of the active site.

The protein belongs to the protein-tyrosine phosphatase family. Interacts with cyclin-dependent kinases such as CDK1, CDK2 and CDK3. Does not interact with CDK4. Interacts (via C-terminus) with phosphorylated CDK2 (via C-terminal helix). Interacts with MS4A3 (via C-terminus); the interaction enhances CDKN3 enzymatic activity.

It is found in the cytoplasm. The protein localises to the perinuclear region. It catalyses the reaction O-phospho-L-tyrosyl-[protein] + H2O = L-tyrosyl-[protein] + phosphate. It carries out the reaction O-phospho-L-seryl-[protein] + H2O = L-seryl-[protein] + phosphate. The catalysed reaction is O-phospho-L-threonyl-[protein] + H2O = L-threonyl-[protein] + phosphate. Its function is as follows. May play a role in cell cycle regulation. Dual specificity phosphatase active toward substrates containing either phosphotyrosine or phosphoserine residues. Dephosphorylates CDK2 at 'Thr-160' in a cyclin-dependent manner. The protein is Cyclin-dependent kinase inhibitor 3 of Rattus norvegicus (Rat).